The following is a 706-amino-acid chain: Phosphatase and actin regulator 4 (706 aa).

The stretch at 42–67 (EVLERKISMRKPREELVKRGLLVEVP) is one RPEL 1 repeat. Disordered regions lie at residues 65 to 123 (EVPE…QPCA), 196 to 380 (VHPR…HIPV), 385 to 404 (VPMLTLAPPNTEVEKEQSAS), and 459 to 579 (LKVP…REEW). Residues 106–121 (DSTGSRPKSGETTVQP) are compositionally biased toward polar residues. Positions 200-211 (HLSEKNSEKYRP) are enriched in basic and acidic residues. Positions 266-276 (DPSTRQQSSVP) are enriched in polar residues. The segment covering 290 to 299 (KQPPVPPPKP) has biased composition (pro residues). 3 stretches are compositionally biased toward acidic residues: residues 463–476 (DDDDDDNSLEDESL), 508–523 (QEEEEEEEEGVSDTDS), and 531–541 (EDDEEEEEEET). Basic and acidic residues predominate over residues 563-579 (GPHDSNPEFPQRSREEW). RPEL repeat units follow at residues 588 to 613 (SQLNRRLSQRPSAEELEQRNILQKNE) and 625 to 650 (RRLTRKLSQRPTVAELVERKILRFNE).

It belongs to the phosphatase and actin regulator family. As to quaternary structure, binds ppp1ca and actin.

The protein localises to the cytoplasm. The protein resides in the cell projection. Its subcellular location is the lamellipodium. Regulator of protein phosphatase 1 (PP1) required for neural tube and optic fissure closure, and enteric neural crest cell (ENCCs) migration during development. Acts as an activator of PP1. During neural tube closure, localizes to the ventral neural tube and activates PP1, leading to down-regulate cell proliferation within cranial neural tissue and the neural retina. Also acts as a regulator of migration of enteric neural crest cells (ENCCs) by activating PP1, leading to repression of the integrin signaling through the rho/rock pathway. The polypeptide is Phosphatase and actin regulator 4 (phactr4) (Xenopus tropicalis (Western clawed frog)).